A 490-amino-acid polypeptide reads, in one-letter code: Myocilin (490 aa).

An N-terminal signal peptide occupies residues 1-18 (MPATQLLLLACLVWGLGA). N-linked (GlcNAc...) asparagine glycosylation occurs at Asn43. Residues 52-169 (QAMSAIQDLQ…SQEVARLRRG (118 aa)) are a coiled coil. A compositionally biased stretch (basic and acidic residues) spans 146-157 (REENEDLARRLD). Positions 146–188 (REENEDLARRLDSSSQEVARLRRGQCPQARGTPQDVPSGSREV) are disordered. Residues 230 to 489 (GCGELVWVGE…MVTYDLRLSE (260 aa)) enclose the Olfactomedin-like domain. Cysteines 231 and 419 form a disulfide. Residues Asp366, Asn414, Ala415, Val463, and Asp464 each coordinate Ca(2+). Positions 488 to 490 (SEM) match the Microbody targeting signal motif.

As to quaternary structure, homodimer (via N-terminus). Can also form higher oligomers. Interacts with OLFM3, FN1, NRCAM, GLDN and NFASC. Interacts (via N-terminus) with MYL2. Interacts with SFRP1, FRZB, FZD7, FZD10, FZD1 and WIF1; regulates Wnt signaling. Interacts with SNTA1; regulates muscle hypertrophy. Interacts with ERBB2 and ERBB3; activates ERBB2-ERBB3 signaling pathway. Interacts with SNCG; affects its secretion and its aggregation. Palmitoylated. Post-translationally, undergoes a calcium-dependent proteolytic cleavage at Arg-212 by CAPN2 in the endoplasmic reticulum. The result is the production of two fragments, one of 35 kDa containing the C-terminal olfactomedin-like domain, and another of 20 kDa containing the N-terminal leucine zipper-like domain. In terms of processing, glycosylated. As to expression, expressed in optic nerve head, ciliary body and retina.

Its subcellular location is the secreted. The protein localises to the golgi apparatus. It localises to the cytoplasmic vesicle. The protein resides in the extracellular space. It is found in the extracellular matrix. Its subcellular location is the extracellular exosome. The protein localises to the mitochondrion. It localises to the mitochondrion intermembrane space. The protein resides in the mitochondrion inner membrane. It is found in the mitochondrion outer membrane. Its subcellular location is the rough endoplasmic reticulum. The protein localises to the cell projection. It localises to the cilium. The protein resides in the endoplasmic reticulum. Functionally, secreted glycoprotein regulating the activation of different signaling pathways in adjacent cells to control different processes including cell adhesion, cell-matrix adhesion, cytoskeleton organization and cell migration. Promotes substrate adhesion, spreading and formation of focal contacts. Negatively regulates cell-matrix adhesion and stress fiber assembly through Rho protein signal transduction. Modulates the organization of actin cytoskeleton by stimulating the formation of stress fibers through interactions with components of Wnt signaling pathways. Promotes cell migration through activation of PTK2 and the downstream phosphatidylinositol 3-kinase signaling. Plays a role in bone formation and promotes osteoblast differentiation in a dose-dependent manner through mitogen-activated protein kinase signaling. Mediates myelination in the peripheral nervous system through ERBB2/ERBB3 signaling. Plays a role as a regulator of muscle hypertrophy through the components of dystrophin-associated protein complex. Involved in positive regulation of mitochondrial depolarization. Plays a role in neurite outgrowth. May participate in the obstruction of fluid outflow in the trabecular meshwork. This is Myocilin (MYOC) from Felis catus (Cat).